The sequence spans 435 residues: Protein SUPPRESSOR OF K(+) TRANSPORT GROWTH DEFECT 1 (435 aa).

The 66-residue stretch at 7 to 72 (EQAIEYVKQA…LRRAEEIRAV (66 aa)) folds into the MIT domain. The interval 73 to 113 (LDEGGSGPGSNGDAAVATRPKTKPKDGEGGGKDGEDPEQSK) is disordered. Positions 95 to 113 (KPKDGEGGGKDGEDPEQSK) are enriched in basic and acidic residues. 172–179 (GPPGTGKS) contacts ATP.

Belongs to the AAA ATPase family. In terms of assembly, monomer or homodimer (in nucleotide-free form). Decamer, dodecamer or tetradecamer of two stacked respective homooligomeric rings (when bound to ATP); the dodecameric form seems to be predominant. Interacts with members of the ESCRT-III subcomplex such as LIP5, VPS60-1, VPS2.1, VPS20.1, VPS20.2, VPS24-1, VPS32.1, VPS32.2, CHMP1A and VPS24. Binds to PROS/At4g24370. As to expression, mostly expressed in leaves, to a lower extent in seeds, and barely in roots and flowers (at protein level). Particularly expressed in trichomes.

It is found in the cytoplasm. Its subcellular location is the nucleus. The protein resides in the endosome. It localises to the multivesicular body membrane. The protein localises to the prevacuolar compartment membrane. The catalysed reaction is ATP + H2O = ADP + phosphate + H(+). Its activity is regulated as follows. Activated by LIP5 and PROS. In terms of biological role, involved in the transport of biosynthetic membrane proteins from the prevacuolar/endosomal compartment to the vacuole. Required for multivesicular body (MVB) protein sorting. Catalyzes the ATP-dependent dissociation of class E VPS proteins from endosomal membranes, such as the disassembly of the ESCRT-III complex. May also regulate cell cycle. Required during seed development for the formation of mucilage in seed coat and testa. Involved in the maintenance of Na(+)/K(+) homeostasis under salt stress. Required for cell expansion. This is Protein SUPPRESSOR OF K(+) TRANSPORT GROWTH DEFECT 1 from Arabidopsis thaliana (Mouse-ear cress).